A 507-amino-acid chain; its full sequence is L-threonine dehydratase biosynthetic IlvA (507 aa).

Residue Lys-52 is modified to N6-(pyridoxal phosphate)lysine. Pyridoxal 5'-phosphate-binding positions include Asn-79, 182-186, and Ser-309; that span reads GGGGL. ACT-like domains are found at residues 333–404 and 427–498; these read AVFA…DLTH and RLFR…EESA.

Belongs to the serine/threonine dehydratase family. In terms of assembly, homotetramer. Pyridoxal 5'-phosphate is required as a cofactor.

The enzyme catalyses L-threonine = 2-oxobutanoate + NH4(+). Its pathway is amino-acid biosynthesis; L-isoleucine biosynthesis; 2-oxobutanoate from L-threonine: step 1/1. Catalyzes the anaerobic formation of alpha-ketobutyrate and ammonia from threonine in a two-step reaction. The first step involved a dehydration of threonine and a production of enamine intermediates (aminocrotonate), which tautomerizes to its imine form (iminobutyrate). Both intermediates are unstable and short-lived. The second step is the nonenzymatic hydrolysis of the enamine/imine intermediates to form 2-ketobutyrate and free ammonia. In the low water environment of the cell, the second step is accelerated by RidA. In Burkholderia multivorans (strain ATCC 17616 / 249), this protein is L-threonine dehydratase biosynthetic IlvA (ilvA).